A 352-amino-acid polypeptide reads, in one-letter code: Histidine biosynthesis bifunctional protein HisB (352 aa).

A histidinol-phosphatase region spans residues 1–164 (MSQKILFIDR…EIENEILSSF (164 aa)). Asp9 functions as the Nucleophile in the catalytic mechanism. The Mg(2+) site is built by Asp9 and Asp11. The active-site Proton donor is the Asp11. Zn(2+)-binding residues include Cys93, His95, Cys101, and Cys103. Residue Asp130 coordinates Mg(2+). An imidazoleglycerol-phosphate dehydratase region spans residues 165–352 (RSASYQRTTK…ENLASSKGVI (188 aa)).

This sequence in the N-terminal section; belongs to the histidinol-phosphatase family. It in the C-terminal section; belongs to the imidazoleglycerol-phosphate dehydratase family. Mg(2+) serves as cofactor. It depends on Zn(2+) as a cofactor.

The protein localises to the cytoplasm. The enzyme catalyses D-erythro-1-(imidazol-4-yl)glycerol 3-phosphate = 3-(imidazol-4-yl)-2-oxopropyl phosphate + H2O. The catalysed reaction is L-histidinol phosphate + H2O = L-histidinol + phosphate. Its pathway is amino-acid biosynthesis; L-histidine biosynthesis; L-histidine from 5-phospho-alpha-D-ribose 1-diphosphate: step 6/9. The protein operates within amino-acid biosynthesis; L-histidine biosynthesis; L-histidine from 5-phospho-alpha-D-ribose 1-diphosphate: step 8/9. The chain is Histidine biosynthesis bifunctional protein HisB from Campylobacter jejuni subsp. doylei (strain ATCC BAA-1458 / RM4099 / 269.97).